Reading from the N-terminus, the 302-residue chain is Ribosomal RNA small subunit methyltransferase A (302 aa).

S-adenosyl-L-methionine-binding residues include N27, L29, G54, E75, D100, and N138.

This sequence belongs to the class I-like SAM-binding methyltransferase superfamily. rRNA adenine N(6)-methyltransferase family. RsmA subfamily.

It is found in the cytoplasm. The enzyme catalyses adenosine(1518)/adenosine(1519) in 16S rRNA + 4 S-adenosyl-L-methionine = N(6)-dimethyladenosine(1518)/N(6)-dimethyladenosine(1519) in 16S rRNA + 4 S-adenosyl-L-homocysteine + 4 H(+). Functionally, specifically dimethylates two adjacent adenosines (A1518 and A1519) in the loop of a conserved hairpin near the 3'-end of 16S rRNA in the 30S particle. May play a critical role in biogenesis of 30S subunits. This is Ribosomal RNA small subunit methyltransferase A from Natranaerobius thermophilus (strain ATCC BAA-1301 / DSM 18059 / JW/NM-WN-LF).